The sequence spans 37 residues: Potassium channel toxin alpha-KTx 2.14 (37 aa).

3 cysteine pairs are disulfide-bonded: Cys-7–Cys-28, Cys-13–Cys-33, and Cys-17–Cys-35.

It belongs to the short scorpion toxin superfamily. Potassium channel inhibitor family. Alpha-KTx 02 subfamily. As to expression, expressed by the venom gland.

It is found in the secreted. Its function is as follows. Reversibly blocks hKv1.1/KCNA1 (50% inhibition of current at 1 uM). Seems not to be voltage-dependent. This is Potassium channel toxin alpha-KTx 2.14 from Heteroctenus garridoi (Cuban scorpion).